Here is a 571-residue protein sequence, read N- to C-terminus: MTLNGWIQIALYGAIVLALVKPLGSYMTRVFTGERTFLSPVLGPIERGLYRVSGIDDRQEQHWLAYTGAVILFHVLGFAVLYAILRLQAVLPLNPADQTAVAPDLAFNTSTSFITNTNWQSYGGETTLSYLSQMLGLTHQNFLSAATGIAVAVALIRGFARASSGTIGSFWVDVTRATLYVLLPICVPYTLFLVWQGIPQTLGAYADATTLEGAKQTIALGPVASQVAIKMLGTNGGGFFNANAAHPFENPTALSNLVQMVSIFAIGAALTNVFGRMVGDERQGWAILGAMGILFLAGVLVTYWAEAHGSSVLNSFGLTGGNMEGKETRFGIAASALFAVITTAASCGAVNAMHDSFTALGGLIPLLNMQLGEIIIGGVGAGLYGMLIFVIVAIFVAGLMVGRTPEYLGKKIEAKEVKMAMLGILCLPLMMLGFTALATVVPAGLAGPANAGPHGFTEILYAYTSAAANNGSAFGGLTANTLFYNSTLAIGMLVGRFFVKIPVLAIAGSLAAKKTVPASAGTFPTHGGLFVGLLVGVILIIGGLTFFPSLALGPVVEHLAGAAGQTFATGG.

11 consecutive transmembrane segments (helical) span residues 5 to 25, 64 to 84, 136 to 156, 179 to 199, 254 to 274, 285 to 305, 330 to 350, 357 to 376, 421 to 441, 488 to 508, and 527 to 547; these read GWIQ…PLGS, LAYT…LYAI, GLTH…VALI, LYVL…QGIP, LSNL…TNVF, WAIL…TYWA, FGIA…CGAV, FTAL…EIII, MLGI…ATVV, LAIG…AIAG, and GGLF…LTFF.

Belongs to the KdpA family. The system is composed of three essential subunits: KdpA, KdpB and KdpC.

Its subcellular location is the cell inner membrane. Functionally, part of the high-affinity ATP-driven potassium transport (or Kdp) system, which catalyzes the hydrolysis of ATP coupled with the electrogenic transport of potassium into the cytoplasm. This subunit binds the periplasmic potassium ions and delivers the ions to the membrane domain of KdpB through an intramembrane tunnel. This is Potassium-transporting ATPase potassium-binding subunit from Methylobacterium radiotolerans (strain ATCC 27329 / DSM 1819 / JCM 2831 / NBRC 15690 / NCIMB 10815 / 0-1).